A 343-amino-acid chain; its full sequence is MLLLAIESSCDETAAAVVRDGRIILSNIVASQISVHAGYGGVVPEIASRKHLETISTVIEEALQAAGVSLTDVDGIAVTQGPGLAGALLVGISTAKAMAYALGVPIAGVNHIESHILAIFLERSIEFPFVALAVSGGHTHLYLVEAVGRYKTLGQTLDDAAGEAFDKVAKLLGLPYPGGALIDRLAAEGDPEAIRFPRPLMRDESFNFSFSGLKTSVLNYLQKNPAAADGRALNDLCASFQAAVCDVLVSKTAAAVSATGIKRVVVAGGVACNNGLRREMSRLAELKGIELHIPSPLLCSDNAAMIAVPGDYYLSNNILSGFDIDALPVWPLDSIASRLTKGS.

The Fe cation site is built by His-111 and His-115. Substrate is bound by residues 133 to 137 (AVSGG), Asp-166, Gly-179, Asp-183, and Asn-273. Asp-301 lines the Fe cation pocket.

Belongs to the KAE1 / TsaD family. Fe(2+) serves as cofactor.

It is found in the cytoplasm. It carries out the reaction L-threonylcarbamoyladenylate + adenosine(37) in tRNA = N(6)-L-threonylcarbamoyladenosine(37) in tRNA + AMP + H(+). Its function is as follows. Required for the formation of a threonylcarbamoyl group on adenosine at position 37 (t(6)A37) in tRNAs that read codons beginning with adenine. Is involved in the transfer of the threonylcarbamoyl moiety of threonylcarbamoyl-AMP (TC-AMP) to the N6 group of A37, together with TsaE and TsaB. TsaD likely plays a direct catalytic role in this reaction. This chain is tRNA N6-adenosine threonylcarbamoyltransferase, found in Geotalea uraniireducens (strain Rf4) (Geobacter uraniireducens).